A 419-amino-acid polypeptide reads, in one-letter code: Serine/threonine-protein kinase Kist (419 aa).

In terms of domain architecture, Protein kinase spans 23–303; that stretch reads WQVQSRLGSG…PAEMALCSPF (281 aa). ATP contacts are provided by residues 29 to 37 and K54; that span reads LGSGSSASV. D158 (proton acceptor) is an active-site residue. Residues 323–405 enclose the RRM domain; sequence LRLLNVLDDD…GKFVVATFYP (83 aa).

It belongs to the protein kinase superfamily. Ser/Thr protein kinase family. As to quaternary structure, interacts with PAM and CDKN1B/p27Kip1. Interacts with stathmin.

The protein resides in the nucleus. It carries out the reaction L-seryl-[protein] + ATP = O-phospho-L-seryl-[protein] + ADP + H(+). The enzyme catalyses L-threonyl-[protein] + ATP = O-phospho-L-threonyl-[protein] + ADP + H(+). Upon serum stimulation, phosphorylates CDKN1B/p27Kip1, thus controlling CDKN1B subcellular location and cell cycle progression in G1 phase. May be involved in trafficking and/or processing of RNA. The chain is Serine/threonine-protein kinase Kist (Uhmk1) from Mus musculus (Mouse).